The following is a 37-amino-acid chain: Large ribosomal subunit protein bL36 (37 aa).

The protein belongs to the bacterial ribosomal protein bL36 family.

This Dehalococcoides mccartyi (strain ATCC BAA-2266 / KCTC 15142 / 195) (Dehalococcoides ethenogenes (strain 195)) protein is Large ribosomal subunit protein bL36.